A 471-amino-acid chain; its full sequence is Ribulose bisphosphate carboxylase large chain (471 aa).

Substrate contacts are provided by N115 and T165. K167 functions as the Proton acceptor in the catalytic mechanism. Position 169 (K169) interacts with substrate. Mg(2+)-binding residues include K193, D195, and E196. K193 is subject to N6-carboxylysine. Catalysis depends on H286, which acts as the Proton acceptor. Substrate-binding residues include R287, H319, and S371.

It belongs to the RuBisCO large chain family. Type I subfamily. In terms of assembly, heterohexadecamer of 8 large chains and 8 small chains. It depends on Mg(2+) as a cofactor.

The protein localises to the carboxysome. The catalysed reaction is 2 (2R)-3-phosphoglycerate + 2 H(+) = D-ribulose 1,5-bisphosphate + CO2 + H2O. The enzyme catalyses D-ribulose 1,5-bisphosphate + O2 = 2-phosphoglycolate + (2R)-3-phosphoglycerate + 2 H(+). RuBisCO catalyzes two reactions: the carboxylation of D-ribulose 1,5-bisphosphate, the primary event in carbon dioxide fixation, as well as the oxidative fragmentation of the pentose substrate in the photorespiration process. Both reactions occur simultaneously and in competition at the same active site. The chain is Ribulose bisphosphate carboxylase large chain from Synechococcus sp. (strain WH7803).